Reading from the N-terminus, the 257-residue chain is uncharacterized protein (257 aa).

The protein to yeast YKR015c.

This is an uncharacterized protein from Saccharomyces cerevisiae (strain ATCC 204508 / S288c) (Baker's yeast).